Here is an 834-residue protein sequence, read N- to C-terminus: Mannosyl-oligosaccharide glucosidase (834 aa).

The segment covering 1–10 has biased composition (basic residues); the sequence is MARGERRRRA. Residues 1–36 are Cytoplasmic-facing; it reads MARGERRRRAAAAEGARPLERARGAGRRDGRAGGAR. Positions 1–37 are disordered; sequence MARGERRRRAAAAEGARPLERARGAGRRDGRAGGARG. Residues 3-9 carry the Endoplasmic reticulum targeting motif; it reads RGERRRR. A compositionally biased stretch (basic and acidic residues) spans 17–31; that stretch reads RPLERARGAGRRDGR. A helical; Signal-anchor for type II membrane protein membrane pass occupies residues 37–57; sequence GSAGGAALAVVVLALAFGLSG. The Lumenal segment spans residues 58-834; it reads RWVLAWLGVR…LVLLIMAEEY (777 aa). Residues 74–136 form a required for endoplasmic reticulum targeting region; sequence PAPSALPPDS…GTPPKLRHTC (63 aa). Asp580 functions as the Proton donor in the catalytic mechanism. The N-linked (GlcNAc...) asparagine glycan is linked to Asn654. The active-site Proton acceptor is Glu804.

It belongs to the glycosyl hydrolase 63 family.

Its subcellular location is the endoplasmic reticulum membrane. It catalyses the reaction N(4)-(alpha-D-Glc-(1-&gt;2)-alpha-D-Glc-(1-&gt;3)-alpha-D-Glc-(1-&gt;3)-alpha-D-Man-(1-&gt;2)-alpha-D-Man-(1-&gt;2)-alpha-D-Man-(1-&gt;3)-[alpha-D-Man-(1-&gt;2)-alpha-D-Man-(1-&gt;3)-[alpha-D-Man-(1-&gt;2)-alpha-D-Man-(1-&gt;6)]-alpha-D-Man-(1-&gt;6)]-beta-D-Man-(1-&gt;4)-beta-D-GlcNAc-(1-&gt;4)-beta-D-GlcNAc)-L-asparaginyl-[protein] + H2O = N(4)-(alpha-D-Glc-(1-&gt;3)-alpha-D-Glc-(1-&gt;3)-alpha-D-Man-(1-&gt;2)-alpha-D-Man-(1-&gt;2)-alpha-D-Man-(1-&gt;3)-[alpha-D-Man-(1-&gt;2)-alpha-D-Man-(1-&gt;3)-[alpha-D-Man-(1-&gt;2)-alpha-D-Man-(1-&gt;6)]-alpha-D-Man-(1-&gt;6)]-beta-D-Man-(1-&gt;4)-beta-D-GlcNAc-(1-&gt;4)-beta-D-GlcNAc)-L-asparaginyl-[protein] + beta-D-glucose. The protein operates within glycan metabolism; N-glycan degradation. In the context of N-glycan degradation, cleaves the distal alpha 1,2-linked glucose residue from the Glc(3)Man(9)GlcNAc(2) oligosaccharide precursor in a highly specific manner. In Rattus norvegicus (Rat), this protein is Mannosyl-oligosaccharide glucosidase.